The following is an 824-amino-acid chain: Leucine--tRNA ligase (824 aa).

Positions 42–52 (PYPSGHLHMGH) match the 'HIGH' region motif. The 'KMSKS' region signature appears at 581–585 (KMSKS). An ATP-binding site is contributed by K584.

The protein belongs to the class-I aminoacyl-tRNA synthetase family.

The protein localises to the cytoplasm. It catalyses the reaction tRNA(Leu) + L-leucine + ATP = L-leucyl-tRNA(Leu) + AMP + diphosphate. The polypeptide is Leucine--tRNA ligase (Syntrophomonas wolfei subsp. wolfei (strain DSM 2245B / Goettingen)).